A 1068-amino-acid chain; its full sequence is tRNA wybutosine-synthesizing protein 4 (1068 aa).

Positions 1–31 (MCPPEQPAKAMAPSKSNQAAKSAVPTKEEKS) are disordered. Residues Arg-81, Gly-107, Asp-134, 181 to 182 (DL), and Glu-208 contribute to the S-adenosyl-L-methionine site. The 149-residue stretch at 876 to 1024 (ADFPSLSSDF…ALGRDVYGNR (149 aa)) folds into the JmjC domain.

It belongs to the methyltransferase superfamily. LCMT family.

The catalysed reaction is 7-[(3S)-3-amino-3-carboxypropyl]wyosine(37) in tRNA(Phe) + S-adenosyl-L-methionine = 7-[(3S)-(3-amino-3-methoxycarbonyl)propyl]wyosine(37) in tRNA(Phe) + S-adenosyl-L-homocysteine. It catalyses the reaction 7-[(3S)-(3-amino-3-methoxycarbonyl)propyl]wyosine(37) in tRNA(Phe) + S-adenosyl-L-methionine + CO2 = wybutosine(37) in tRNA(Phe) + S-adenosyl-L-homocysteine + 2 H(+). It participates in tRNA modification; wybutosine-tRNA(Phe) biosynthesis. Functionally, probable S-adenosyl-L-methionine-dependent methyltransferase that acts as a component of the wybutosine biosynthesis pathway. Wybutosine is a hyper modified guanosine with a tricyclic base found at the 3'-position adjacent to the anticodon of eukaryotic phenylalanine tRNA. May methylate the carboxyl group of leucine residues to form alpha-leucine ester residues. This is tRNA wybutosine-synthesizing protein 4 (ppm2) from Emericella nidulans (strain FGSC A4 / ATCC 38163 / CBS 112.46 / NRRL 194 / M139) (Aspergillus nidulans).